The primary structure comprises 309 residues: Probable cell division protein WhiA (309 aa).

Residues 275–309 constitute a DNA-binding region (H-T-H motif); sequence SLKELGELVPGGPISKSGINHRLRKINQYAEKLRA.

The protein belongs to the WhiA family.

In terms of biological role, involved in cell division and chromosome segregation. The protein is Probable cell division protein WhiA of Pediococcus pentosaceus (strain ATCC 25745 / CCUG 21536 / LMG 10740 / 183-1w).